The primary structure comprises 294 residues: UPF0761 membrane protein YPN_0254 (294 aa).

7 consecutive transmembrane segments (helical) span residues 44-64 (LLSLVPLITVIFALFAAFPMF), 67-87 (ISIKLKAFIFANFMPATGDII), 108-128 (GLIVTALLLIYSVDSVLNIIW), 136-156 (LVFSFAVYWMVLTLGPILVGA), 185-205 (VFPLLISWVSFWLLYSVVPTV), 212-232 (ALIGALVAALLFELGKKGFAM), and 246-266 (VLAVIPILFLWVYWSWCIVLL).

Belongs to the UPF0761 family.

The protein resides in the cell inner membrane. The chain is UPF0761 membrane protein YPN_0254 from Yersinia pestis bv. Antiqua (strain Nepal516).